The primary structure comprises 862 residues: Protein translocase subunit SecA (862 aa).

ATP-binding positions include Gln88, Gly106–Thr110, and Asp506. Zn(2+) contacts are provided by Cys839, Cys841, Cys850, and His851.

It belongs to the SecA family. In terms of assembly, monomer and homodimer. Part of the essential Sec protein translocation apparatus which comprises SecA, SecYEG and auxiliary proteins SecDF-YajC and YidC. Zn(2+) serves as cofactor.

It localises to the cell inner membrane. The protein localises to the cytoplasm. It catalyses the reaction ATP + H2O + cellular proteinSide 1 = ADP + phosphate + cellular proteinSide 2.. Part of the Sec protein translocase complex. Interacts with the SecYEG preprotein conducting channel. Has a central role in coupling the hydrolysis of ATP to the transfer of proteins into and across the cell membrane, serving as an ATP-driven molecular motor driving the stepwise translocation of polypeptide chains across the membrane. In Campylobacter jejuni subsp. jejuni serotype O:2 (strain ATCC 700819 / NCTC 11168), this protein is Protein translocase subunit SecA.